The sequence spans 348 residues: Aspartate carbamoyltransferase catalytic subunit (348 aa).

Positions 59 and 60 each coordinate carbamoyl phosphate. Lys-87 is a binding site for L-aspartate. Residues Arg-109, His-142, and Gln-145 each coordinate carbamoyl phosphate. Positions 182 and 253 each coordinate L-aspartate. Carbamoyl phosphate contacts are provided by Gly-294 and Pro-295.

This sequence belongs to the aspartate/ornithine carbamoyltransferase superfamily. ATCase family. Heterododecamer (2C3:3R2) of six catalytic PyrB chains organized as two trimers (C3), and six regulatory PyrI chains organized as three dimers (R2).

It catalyses the reaction carbamoyl phosphate + L-aspartate = N-carbamoyl-L-aspartate + phosphate + H(+). It participates in pyrimidine metabolism; UMP biosynthesis via de novo pathway; (S)-dihydroorotate from bicarbonate: step 2/3. Its function is as follows. Catalyzes the condensation of carbamoyl phosphate and aspartate to form carbamoyl aspartate and inorganic phosphate, the committed step in the de novo pyrimidine nucleotide biosynthesis pathway. The chain is Aspartate carbamoyltransferase catalytic subunit from Prochlorococcus marinus (strain MIT 9313).